The chain runs to 164 residues: Mineralocorticoid receptor (164 aa).

The NR LBD domain maps to 1-162 (QYSWMCLSSF…EFPRCWWRSS (162 aa)). Residues R15 and T143 each contribute to the 21-hydroxyprogesterone site. Positions 15 and 143 each coordinate aldosterone. Residues R15 and T143 each contribute to the progesterone site.

This sequence belongs to the nuclear hormone receptor family. NR3 subfamily. In terms of assembly, heteromultimeric cytoplasmic complex with HSP90, HSP70, and FKBP4, in the absence of ligand. After ligand binding, it translocates to the nucleus and binds to DNA as a homodimer and as a heterodimer with NR3C1. Binds the coactivator NCOA2. May interact with HSD11B2 in the absence of ligand. Binds the coactivators NCOA1, TIF1 and NRIP1. In terms of processing, phosphorylated.

It is found in the cytoplasm. The protein resides in the nucleus. It localises to the endoplasmic reticulum membrane. Functionally, receptor for both mineralocorticoids (MC) such as aldosterone and glucocorticoids (GC) such as corticosterone or cortisol. Binds to mineralocorticoid response elements (MRE) and transactivates target genes. The effect of MC is to increase ion and water transport and thus raise extracellular fluid volume and blood pressure and lower potassium levels. In Sus scrofa (Pig), this protein is Mineralocorticoid receptor (NR3C2).